The chain runs to 651 residues: Protein cueball (651 aa).

An N-terminal signal peptide occupies residues 1–21 (MILRLFILLSIITVYLQLSVG). Residues 22 to 540 (IQQQFEFAIT…VCLAPNAWTG (519 aa)) lie on the Extracellular side of the membrane. Residues asparagine 77, asparagine 102, and asparagine 114 are each glycosylated (N-linked (GlcNAc...) asparagine). LDL-receptor class B repeat units follow at residues 115–162 (RTIY…DICG), 163–207 (RKLY…DQGA), and 208–253 (KRIF…TRNA). An N-linked (GlcNAc...) asparagine glycan is attached at asparagine 183. Positions 290-311 (VEGEEGTGAMDDNDIWPVGDFE) are disordered. N-linked (GlcNAc...) asparagine glycosylation is present at asparagine 324. EGF-like domains lie at 374–408 (QLDELQREHCLGGGTYYPQQKFCVCVPGYKGTRCE), 409–440 (TNECHNFCVHGTCQISEMGYPKCYCQPGYSGE), and 443–480 (EVKKCLNFCQNGGDCQLDELTGEASCQCPSNFGGLRCE). Intrachain disulfides connect cysteine 383–cysteine 396, cysteine 398–cysteine 407, cysteine 412–cysteine 421, cysteine 416–cysteine 431, cysteine 447–cysteine 457, cysteine 451–cysteine 468, and cysteine 470–cysteine 479. N-linked (GlcNAc...) asparagine glycans are attached at residues asparagine 482 and asparagine 499. Residues 541-561 (SVLMPLMISLILILLLLTIFI) traverse the membrane as a helical segment. Residues 562-651 (HGLRRLYKPK…LIHNMEDDLY (90 aa)) are Cytoplasmic-facing.

This sequence belongs to the cueball family.

Its subcellular location is the cell membrane. Its function is as follows. Has a role in spermatogenesis and oogenesis. This Drosophila willistoni (Fruit fly) protein is Protein cueball.